A 129-amino-acid chain; its full sequence is Large ribosomal subunit protein bL12 (129 aa).

It belongs to the bacterial ribosomal protein bL12 family. As to quaternary structure, homodimer. Part of the ribosomal stalk of the 50S ribosomal subunit. Forms a multimeric L10(L12)X complex, where L10 forms an elongated spine to which 2 to 4 L12 dimers bind in a sequential fashion. Binds GTP-bound translation factors.

Forms part of the ribosomal stalk which helps the ribosome interact with GTP-bound translation factors. Is thus essential for accurate translation. The chain is Large ribosomal subunit protein bL12 from Synechococcus sp. (strain CC9605).